The primary structure comprises 336 residues: HTH-type transcriptional regulator RafR (336 aa).

An HTH lacI-type domain is found at 2–55 (SLKAIATTLGISVTTVSRALGGFSDVAASTRERVEAEARRRGYRPNTQARRLKT). Positions 3-22 (LKAIATTLGISVTTVSRALG) form a DNA-binding region, H-T-H motif.

Homodimer.

In terms of biological role, repressor that negatively controls the expression of the raffinose (raf) operon by binding to the raf operator (rafO) DNA. Acts by binding to two operator sites, O1 and 02, which flank the -35 raf promoter box. RafR bound to 02 alone results in 45 % repression of transcription, whereas RafR bound to O1 leads to only 6% repression. This is HTH-type transcriptional regulator RafR from Escherichia coli.